The following is a 103-amino-acid chain: Acyl carrier protein (103 aa).

Positions 14-89 constitute a Carrier domain; sequence NIVSNIVQDI…EFIDFTLQTI (76 aa). The residue at position 49 (Ser49) is an O-(pantetheine 4'-phosphoryl)serine.

The protein belongs to the acyl carrier protein (ACP) family. In terms of processing, 4'-phosphopantetheine is transferred from CoA to a specific serine of apo-ACP by AcpS. This modification is essential for activity because fatty acids are bound in thioester linkage to the sulfhydryl of the prosthetic group.

The protein localises to the plastid. The protein resides in the cyanelle. The protein operates within lipid metabolism; fatty acid biosynthesis. Its function is as follows. Carrier of the growing fatty acid chain in fatty acid biosynthesis. This is Acyl carrier protein from Cyanophora paradoxa.